The primary structure comprises 508 residues: Flagellin (508 aa).

The protein belongs to the bacterial flagellin family.

The protein resides in the secreted. Its subcellular location is the bacterial flagellum. In terms of biological role, flagellin is the subunit protein which polymerizes to form the filaments of bacterial flagella. The sequence is that of Flagellin (fliC) from Salmonella oranienberg.